Here is a 747-residue protein sequence, read N- to C-terminus: Myotubularin-related protein 12 (747 aa).

The Myotubularin phosphatase domain maps to 205–643 (FDTPKDWCWE…PEIKVWAQRY (439 aa)). Residues 449–558 (VPIFLLFLDC…RGQQKGSRFK (110 aa)) form an interaction with MTM1 region. The tract at residues 548–575 (DRGQQKGSRFKHQRQLSLPLTQSKSSPK) is disordered. The span at 562-572 (QLSLPLTQSKS) shows a compositional bias: polar residues. A phosphoserine mark is found at Ser564 and Ser601.

It belongs to the protein-tyrosine phosphatase family. Non-receptor class myotubularin subfamily. As to quaternary structure, heterodimer with lipid phosphatase MTM1. Heterodimer with lipid phosphatase MTMR2. As to expression, expressed in skeletal muscles (at protein level).

The protein resides in the cytoplasm. The protein localises to the sarcoplasmic reticulum. It localises to the myofibril. It is found in the sarcomere. Functionally, acts as an adapter for the myotubularin-related phosphatases. Regulates phosphatase MTM1 protein stability and possibly its intracellular location. By stabilizing MTM1 protein levels, required for skeletal muscle maintenance but not for myogenesis. This chain is Myotubularin-related protein 12 (Mtmr12), found in Mus musculus (Mouse).